The following is a 355-amino-acid chain: Heat-inducible transcription repressor HrcA (355 aa).

This sequence belongs to the HrcA family.

Functionally, negative regulator of class I heat shock genes (grpE-dnaK-dnaJ and groELS operons). Prevents heat-shock induction of these operons. In Nitratidesulfovibrio vulgaris (strain DP4) (Desulfovibrio vulgaris), this protein is Heat-inducible transcription repressor HrcA.